A 181-amino-acid polypeptide reads, in one-letter code: UPF0397 protein SSU98_0390 (181 aa).

5 helical membrane-spanning segments follow: residues 9-29 (VVAT…INIP), 46-66 (LLAV…GHTL), 70-90 (LTYG…LVVG), 108-128 (ILFF…VIAP), and 147-167 (LVAG…LLVV).

This sequence belongs to the UPF0397 family.

Its subcellular location is the cell membrane. The chain is UPF0397 protein SSU98_0390 from Streptococcus suis (strain 98HAH33).